The primary structure comprises 466 residues: Vimentin (466 aa).

Composition is skewed to low complexity over residues 1–13 and 20–33; these read MSTRSVSSSSYRR and TSSRPSSNRSYVTT. Positions 1–33 are disordered; sequence MSTRSVSSSSYRRMFGGSGTSSRPSSNRSYVTT. Position 2 is an N-acetylserine (S2). The segment at 2 to 95 is head; that stretch reads STRSVSSSSY…FSLADAINTE (94 aa). The residue at position 5 (S5) is a Phosphoserine. S7 carries the phosphoserine; by PKA and PKC; alternate modification. A glycan (O-linked (GlcNAc) serine; alternate) is linked at S7. S8 is subject to Phosphoserine. Residues S9 and S10 each carry the phosphoserine; by PKC modification. T20 is subject to Phosphothreonine. Phosphoserine occurs at positions 25 and 26. O-linked (GlcNAc) threonine glycosylation occurs at T33. O-linked (GlcNAc) serine; alternate glycosylation is present at S34. S34 bears the Phosphoserine; by PKC; alternate mark. The residue at position 39 (S39) is a Phosphoserine; by CaMK2, PKA, PKC and ROCK2. Position 42 is a phosphoserine; by PKC (S42). The residue at position 47 (S47) is a Phosphoserine; by PKA. 2 positions are modified to phosphoserine: S49 and S51. Y53 carries the phosphotyrosine modification. 2 positions are modified to phosphoserine: S55 and S56. The residue at position 61 (Y61) is a Phosphotyrosine. The residue at position 66 (S66) is a Phosphoserine; by PKA and PKC. Residue S72 is modified to Phosphoserine; by AURKB and ROCK2. Residues S73, S83, and S87 each carry the phosphoserine modification. Residues 96–131 are coil 1A; sequence FKNTRTNEKVELQELNDRFANYIDKVRFLEQQNKIL. Positions 96–131 form a coiled coil; it reads FKNTRTNEKVELQELNDRFANYIDKVRFLEQQNKIL. Residues 103–411 form the IF rod domain; the sequence is EKVELQELND…KLLEGEESRI (309 aa). K104 participates in a covalent cross-link: Glycyl lysine isopeptide (Lys-Gly) (interchain with G-Cter in SUMO2). At Y117 the chain carries Phosphotyrosine. K120, K129, and K139 each carry N6-acetyllysine; alternate. K120 and K129 each carry N6-succinyllysine; alternate. Glycyl lysine isopeptide (Lys-Gly) (interchain with G-Cter in SUMO2); alternate cross-links involve residues K120, K129, and K139. The segment at 132-153 is linker 1; that stretch reads LAELEQLKGQGKSRLGDLYEEE. Position 144 is a phosphoserine (S144). Residues 154-245 adopt a coiled-coil conformation; the sequence is MRELRRQVDQ…KLHDEEIQEL (92 aa). The tract at residues 154–245 is coil 1B; sequence MRELRRQVDQ…KLHDEEIQEL (92 aa). N6-acetyllysine is present on K168. K188 bears the N6-acetyllysine; alternate mark. At K188 the chain carries N6-succinyllysine; alternate. Position 214 is a phosphoserine (S214). N6-acetyllysine; alternate is present on K223. Residue K223 forms a Glycyl lysine isopeptide (Lys-Gly) (interchain with G-Cter in SUMO2); alternate linkage. Residue S226 is modified to Phosphoserine. K235 carries the post-translational modification N6-acetyllysine. Positions 246-268 are linker 12; it reads QAQIQEQHVQIDVDVSKPDLTAA. K262 participates in a covalent cross-link: Glycyl lysine isopeptide (Lys-Gly) (interchain with G-Cter in SUMO2). The coil 2 stretch occupies residues 269–407; it reads LRDVRQQYES…ATYRKLLEGE (139 aa). N6-acetyllysine; alternate is present on K294. K294 bears the N6-succinyllysine; alternate mark. A Glycyl lysine isopeptide (Lys-Gly) (interchain with G-Cter in SUMO2); alternate cross-link involves residue K294. A Phosphoserine modification is found at S299. The stretch at 303 to 407 forms a coiled coil; it reads NRNNDALRQA…ATYRKLLEGE (105 aa). Residue K313 forms a Glycyl lysine isopeptide (Lys-Gly) (interchain with G-Cter in SUMO2) linkage. S325 carries the post-translational modification Phosphoserine. The [IL]-x-C-x-x-[DE] motif signature appears at 326–329; sequence LTCE. At K373 the chain carries N6-acetyllysine; alternate. A Glycyl lysine isopeptide (Lys-Gly) (interchain with G-Cter in SUMO2); alternate cross-link involves residue K373. A tail region spans residues 408–466; it reads ESRISLPLPNFSSLNLRETNLESLPLVDTHSKRTLLIKTVETRDGQVINETSQHHDDLE. Phosphoserine is present on residues S409, S412, S419, and S420. T426 carries the phosphothreonine modification. Residue S430 is modified to Phosphoserine. Position 436 is a phosphothreonine (T436). At S438 the chain carries Phosphoserine. K439 is covalently cross-linked (Glycyl lysine isopeptide (Lys-Gly) (interchain with G-Cter in SUMO2)). Residue K445 is modified to N6-acetyllysine; alternate. N6-succinyllysine; alternate is present on K445. A Glycyl lysine isopeptide (Lys-Gly) (interchain with G-Cter in SUMO2); alternate cross-link involves residue K445. K445 is covalently cross-linked (Glycyl lysine isopeptide (Lys-Gly) (interchain with G-Cter in SUMO1); alternate). A phosphothreonine mark is found at T446 and T458. S459 is modified (phosphoserine).

Belongs to the intermediate filament family. In terms of assembly, homomer assembled from elementary dimers. Identified in complexes that contain VIM, EZR, AHNAK, BFSP1, BFSP2, ANK2, PLEC, PRX and spectrin. Interacts with BCAS3. Interacts with LGSN. Interacts with SYNM. Interacts (via rod region) with PLEC (via CH 1 domain). Interacts with STK33. Interacts with LARP6. Interacts with RAB8B. Interacts with TOR1A; the interaction associates TOR1A with the cytoskeleton. Interacts with TOR1AIP1. Interacts with TOR1AIP1. Interacts with DIAPH1. Interacts with EPPK1; interaction is dependent of higher-order structure of intermediate filament. Interacts with the non-receptor tyrosine kinase SRMS; the interaction leads to phosphorylation of VIM. Interacts with NOD2. Interacts (via head region) with CORO1C. Interacts with HDGF. Interacts with PRKCE (via phorbol-ester/DAG-type 2 domain). Interacts with BFSP2. Interacts with PPL. Interacts with PKP1 and PKP2. Interacts with SCRIB (via PDZ domains); the interaction protects SCRIB from proteasomal degradation and facilitates SCRIB localization to intermediate filaments, the interaction is reduced by cell contact inhibition. Post-translationally, one of the most prominent phosphoproteins in various cells of mesenchymal origin. Phosphorylation is enhanced during cell division, at which time vimentin filaments are significantly reorganized. Phosphorylation by PKN1 inhibits the formation of filaments. Filament disassembly during mitosis is promoted by phosphorylation at Ser-55 as well as by nestin. Phosphorylated at Ser-56 by CDK5 during neutrophil secretion in the cytoplasm. Phosphorylated by STK33. Phosphorylated on tyrosine residues by SRMS. In terms of processing, S-nitrosylation is induced by interferon-gamma and oxidatively-modified low-densitity lipoprotein (LDL(ox)) possibly implicating the iNOS-S100A8/9 transnitrosylase complex.

Its subcellular location is the cytoplasm. It localises to the cytoskeleton. It is found in the nucleus matrix. The protein localises to the cell membrane. Functionally, vimentins are class-III intermediate filaments found in various non-epithelial cells, especially mesenchymal cells. Vimentin is attached to the nucleus, endoplasmic reticulum, and mitochondria, either laterally or terminally. Plays a role in cell directional movement, orientation, cell sheet organization and Golgi complex polarization at the cell migration front. Protects SCRIB from proteasomal degradation and facilitates its localization to intermediate filaments in a cell contact-mediated manner. Involved with LARP6 in the stabilization of type I collagen mRNAs for CO1A1 and CO1A2. The protein is Vimentin of Rattus norvegicus (Rat).